The sequence spans 561 residues: Amidophosphoribosyltransferase 2, chloroplastic (561 aa).

Residues 1–27 are compositionally biased toward low complexity; it reads MAATSSISSSLSLNAKPNKLSNNNNNN. Residues 1 to 36 form a disordered region; it reads MAATSSISSSLSLNAKPNKLSNNNNNNKPHRFLRNP. The N-terminal 53 residues, 1 to 53, are a transit peptide targeting the chloroplast; sequence MAATSSISSSLSLNAKPNKLSNNNNNNKPHRFLRNPFLNPSSSSFSPLPASIS. Residue cysteine 87 is the Nucleophile of the active site. Residues 87-307 form the Glutamine amidotransferase type-2 domain; the sequence is CGVVGIYGDS…PGEVLVVDKD (221 aa). [4Fe-4S] cluster contacts are provided by cysteine 323, cysteine 469, cysteine 520, and cysteine 523.

In the C-terminal section; belongs to the purine/pyrimidine phosphoribosyltransferase family. The cofactor is [4Fe-4S] cluster. Requires Mg(2+) as cofactor. In terms of tissue distribution, mostly expressed in leaves, and, to a lower extent, in cotyledons.

It is found in the plastid. The protein resides in the chloroplast stroma. The enzyme catalyses 5-phospho-beta-D-ribosylamine + L-glutamate + diphosphate = 5-phospho-alpha-D-ribose 1-diphosphate + L-glutamine + H2O. It participates in purine metabolism; IMP biosynthesis via de novo pathway; N(1)-(5-phospho-D-ribosyl)glycinamide from 5-phospho-alpha-D-ribose 1-diphosphate: step 1/2. Inhibited by the phenyltriazole acetic acid compound [5-(4-chlorophenyl)-1-isopropyl-1H-[1,2,4]triazol-3-yl]-acetic acid (DAS734), a bleaching herbicide. Catalyzes the first committed step of 'de novo purine biosynthesis from glutamine. Required for chloroplast biogenesis and cell division. Confers sensitivity to the phenyltriazole acetic acid compound [5-(4-chlorophenyl)-1-isopropyl-1H-[1,2,4]triazol-3-yl]-acetic acid (DAS734), a bleaching herbicide. The sequence is that of Amidophosphoribosyltransferase 2, chloroplastic (ASE2) from Arabidopsis thaliana (Mouse-ear cress).